A 316-amino-acid chain; its full sequence is DNA-directed RNA polymerase III subunit RPC6 (316 aa).

At A2 the chain carries N-acetylalanine. Residues K5 and K7 each participate in a glycyl lysine isopeptide (Lys-Gly) (interchain with G-Cter in SUMO2) cross-link. Residues C287, C290, C296, and C307 each contribute to the [4Fe-4S] cluster site.

The protein belongs to the eukaryotic RPC34/RPC39 RNA polymerase subunit family. As to quaternary structure, component of the RNA polymerase III complex consisting of 17 subunits: a ten-subunit horseshoe-shaped catalytic core composed of POLR3A/RPC1, POLR3B/RPC2, POLR1C/RPAC1, POLR1D/RPAC2, POLR3K/RPC10, POLR2E/RPABC1, POLR2F/RPABC2, POLR2H/RPABC3, POLR2K/RPABC4 and POLR2L/RPABC5; a mobile stalk composed of two subunits POLR3H/RPC8 and CRCP/RPC9, protruding from the core and functioning primarily in transcription initiation; and additional subunits homologous to general transcription factors of the RNA polymerase II machinery, POLR3C/RPC3-POLR3F/RPC6-POLR3G/RPC7 heterotrimer required for transcription initiation and POLR3D/RPC4-POLR3E/RPC5 heterodimer involved in both transcription initiation and termination. Directly interacts with POLR3C. Interacts with TBP and TFIIIB90 and GTF3C4. Interacts with MAF1. As part of the RNA polymerase III complex, interacts with PKP2.

The protein localises to the nucleus. In terms of biological role, DNA-dependent RNA polymerase catalyzes the transcription of DNA into RNA using the four ribonucleoside triphosphates as substrates. Specific peripheric component of RNA polymerase III (Pol III) which synthesizes small non-coding RNAs including 5S rRNA, snRNAs, tRNAs and miRNAs from at least 500 distinct genomic loci. Part of POLR3C/RPC3-POLR3F/RPC6-POLR3G/RPC7 heterotrimer that coordinates the dynamics of Pol III stalk and clamp modules during the transition from apo to elongation state. Pol III plays a key role in sensing and limiting infection by intracellular bacteria and DNA viruses, including varicella zoster virus. Acts as a nuclear and cytosolic DNA sensor detecting AT-rich DNA, involved in innate immune response. Can sense non-self dsDNA that serves as template for transcription into dsRNA. The non-self RNA polymerase III transcripts, such as Epstein-Barr virus-encoded RNAs (EBERs) induce type I interferon and NF-kappa-B through the RIG-I pathway. Preferentially binds double-stranded DNA (dsDNA). The chain is DNA-directed RNA polymerase III subunit RPC6 (POLR3F) from Bos taurus (Bovine).